The following is a 246-amino-acid chain: Nodulin-25 (246 aa).

A signal peptide spans 1–24 (MVYSNTYMLLGLGVFVLLSSHVLA).

The protein resides in the symbiosome. It is found in the peribacteroid space. In terms of biological role, involved in the development and function of nodules. It might participate in the biological process of symbiotic nitrogen fixation. This is Nodulin-25 (NMS-25) from Medicago sativa (Alfalfa).